The following is a 508-amino-acid chain: Probable malate:quinone oxidoreductase (508 aa).

This sequence belongs to the MQO family. FAD is required as a cofactor.

The enzyme catalyses (S)-malate + a quinone = a quinol + oxaloacetate. It functions in the pathway carbohydrate metabolism; tricarboxylic acid cycle; oxaloacetate from (S)-malate (quinone route): step 1/1. The protein is Probable malate:quinone oxidoreductase of Chromohalobacter salexigens (strain ATCC BAA-138 / DSM 3043 / CIP 106854 / NCIMB 13768 / 1H11).